Consider the following 816-residue polypeptide: Fibroblast growth factor receptor 1 (816 aa).

The signal sequence occupies residues 1–23; it reads MLSWRHLVFWAMLVMATLSAARP. Residues 24 to 374 lie on the Extracellular side of the membrane; the sequence is APTLPEQVSP…VIMTSPLYLE (351 aa). The 94-residue stretch at 25-118 folds into the Ig-like C2-type 1 domain; that stretch reads PTLPEQVSPK…ETTFFAVNVS (94 aa). Cysteines 54 and 100 form a disulfide. N-linked (GlcNAc...) asparagine glycans are attached at residues asparagine 76 and asparagine 116. Positions 118–152 are disordered; that stretch reads SDRIPSVEDDDDDDEKSSSEEKEAENSKPNPVAPF. The span at 133-143 shows a compositional bias: basic and acidic residues; sequence KSSSEEKEAEN. Ig-like C2-type domains follow at residues 156–244 and 253–355; these read PEKM…YQLD and PILQ…AWLT. Cysteine 176 and cysteine 228 are oxidised to a cystine. N-linked (GlcNAc...) asparagine glycosylation is found at asparagine 238, asparagine 262, asparagine 294, asparagine 315, and asparagine 328. A disulfide bond links cysteine 275 and cysteine 339. Residues 375 to 395 form a helical membrane-spanning segment; sequence IIIYCTGAFLISCMLVTVIIY. Residues 396 to 816 are Cytoplasmic-facing; it reads KMKNTTKKTD…QHANGGLKKR (421 aa). Position 459 is a phosphotyrosine; by autocatalysis (tyrosine 459). Residues 474-763 form the Protein kinase domain; that stretch reads LILGKPLGEG…VAMTSNQEYL (290 aa). Residues 480-486, lysine 510, 558-560, and asparagine 564 each bind ATP; these read LGEGCFG and EYA. Phosphotyrosine; by autocatalysis occurs at positions 579 and 581. Aspartate 619 serves as the catalytic Proton acceptor. ATP contacts are provided by arginine 623 and aspartate 637. Tyrosine 649, tyrosine 650, tyrosine 726, and tyrosine 762 each carry phosphotyrosine; by autocatalysis. A disordered region spans residues 776-816; that stretch reads FPDTRSSTCSSGEDSVFSHDPLPDEPCLPKYQHANGGLKKR. Residues 779 to 788 show a composition bias toward polar residues; that stretch reads TRSSTCSSGE.

It belongs to the protein kinase superfamily. Tyr protein kinase family. Fibroblast growth factor receptor subfamily. As to quaternary structure, monomer. Homodimer after ligand binding. In terms of processing, autophosphorylated. Binding of FGF family members together with heparan sulfate proteoglycan or heparin promotes receptor dimerization and autophosphorylation on tyrosine residues. Autophosphorylation occurs in trans between the two FGFR molecules present in the dimer and proceeds in a highly ordered manner. Phosphotyrosine residues provide docking sites for interacting proteins and so are crucial for FGFR1 function and its regulation. Ubiquitinated. FGFR1 is rapidly ubiquitinated after autophosphorylation, leading to internalization and degradation. Post-translationally, N-glycosylated in the endoplasmic reticulum. The N-glycan chains undergo further maturation to an Endo H-resistant form in the Golgi apparatus.

Its subcellular location is the cell membrane. The protein localises to the nucleus. The protein resides in the cytoplasm. It localises to the cytosol. It is found in the cytoplasmic vesicle. It catalyses the reaction L-tyrosyl-[protein] + ATP = O-phospho-L-tyrosyl-[protein] + ADP + H(+). Present in an inactive conformation in the absence of bound ligand. Ligand binding leads to dimerization and activation by sequential autophosphorylation on tyrosine residues. Tyrosine-protein kinase that acts as a cell-surface receptor for fibroblast growth factors and plays an essential role in the regulation of embryonic development, cell proliferation, differentiation and migration. Required for normal mesoderm patterning and normal skeletogenesis. Phosphorylates PLCG1, FRS2, GAB1 and SHB. Ligand binding leads to the activation of several signaling cascades. Activation of PLCG1 leads to the production of the cellular signaling molecules diacylglycerol and inositol-1,4,5-trisphosphate. Phosphorylation of FRS2 triggers recruitment of GRB2, GAB1, PIK3R1 and SOS1, and mediates activation of RAS, MAPK1/ERK2, MAPK3/ERK1 and the MAP kinase signaling pathway, as well as of the AKT1 signaling pathway. Promotes phosphorylation of SHC1, STAT1 and PTPN11/SHP2. In the nucleus, enhances RPS6KA1 and CREB1 activity and contributes to the regulation of transcription. FGFR1 signaling is down-regulated by ubiquitination, internalization and degradation. This is Fibroblast growth factor receptor 1 (FGFR1) from Pleurodeles waltl (Iberian ribbed newt).